The chain runs to 160 residues: pH-gated potassium channel KcsA (160 aa).

Topologically, residues 1-27 (MPPMLSGLLARLVKLLLGRHGSALHWR) are cytoplasmic. Residues 28-50 (AAGAATVLLVIVLLAGSYLAVLA) form a helical membrane-spanning segment. The Extracellular segment spans residues 51-61 (ERGAPGAQLIT). Positions 62–72 (YPRALWWSVET) form an intramembrane region, helical; Pore-forming. An intramembrane region (pore-forming) is located at residues 73-80 (ATTVGYGD). The Selectivity filter signature appears at 75–80 (TVGYGD). Topologically, residues 81–87 (LYPVTLW) are extracellular. Residues 88–111 (GRLVAVVVMVAGITSFGLVTAALA) traverse the membrane as a helical segment. The Cytoplasmic segment spans residues 112–160 (TWFVGREQERRGHFVRHSEKAAEEAYTRTTRALHERFDRLERMLDDNRR).

This sequence belongs to the potassium channel family. Homotetramer.

It localises to the cell membrane. Its function is as follows. Acts as a pH-gated potassium ion channel; changing the cytosolic pH from 7 to 4 opens the channel. In Streptomyces coelicolor (strain ATCC BAA-471 / A3(2) / M145), this protein is pH-gated potassium channel KcsA (kcsA).